The sequence spans 345 residues: tRNA N6-adenosine threonylcarbamoyltransferase (345 aa).

Residues H115 and H119 each contribute to the Fe cation site. Residues 137 to 141, D170, G183, D187, and N276 each bind substrate; that span reads LVSGG. D306 provides a ligand contact to Fe cation.

It belongs to the KAE1 / TsaD family. Fe(2+) is required as a cofactor.

Its subcellular location is the cytoplasm. The catalysed reaction is L-threonylcarbamoyladenylate + adenosine(37) in tRNA = N(6)-L-threonylcarbamoyladenosine(37) in tRNA + AMP + H(+). Required for the formation of a threonylcarbamoyl group on adenosine at position 37 (t(6)A37) in tRNAs that read codons beginning with adenine. Is involved in the transfer of the threonylcarbamoyl moiety of threonylcarbamoyl-AMP (TC-AMP) to the N6 group of A37, together with TsaE and TsaB. TsaD likely plays a direct catalytic role in this reaction. The protein is tRNA N6-adenosine threonylcarbamoyltransferase of Pediococcus pentosaceus (strain ATCC 25745 / CCUG 21536 / LMG 10740 / 183-1w).